Reading from the N-terminus, the 547-residue chain is MAVISLMFLAVMYVVHHPLMVSDRMDLDTLARSRQLEKRMSEEMRQLEMEFEERSRAAEQKQKVENFWRGDTSSDQLVLGKKDMGWPFQAGGQDGGPLGWILGNLWNAGLFCLFLIFELLRQSMQHEPAFESSSEEEEEEIRVVPVSSYTRLSDFPSQEALEAFYKHYIQNAIRDLPCTCEFVESFVDDLIEACRVLSRREAHPQLEDCLGFGAAFEKWGTLHETQNFDVLVPIVPPQGTMFILEMRDPALGRRCGCVKVDSECMCKHEKLLGDVLCLVHHRDHSAMLSKCTSSIKAALCTSSHLDVCKTVQWFRNMVSNAWALVAHKYDFKLTFPPSTTSCKLRLGYRSGRSLSISLVLGVQREDTLVYLVSQAPEQEQLTSVDWPESFAACEHLFLKLVGRFAPENTCHLKCLQIVLSLQDHQILPPGASRPILTSYHFKTALMHLLLRLPLTDWQHSMLSLRLQDLLWFLGRGLQQRSLHHFLIGNTYLPLTIPIPKAFRNAEPVNLFQHLVLNPVAHSQAVEEFHNLLAQVKTLPCSPVAGGL.

The N-terminal stretch at Met-1–Ser-22 is a signal peptide. The Extracellular segment spans residues Asp-23–Gly-96. Residues Asp-28–Asn-66 are a coiled coil. Residues Pro-97–Phe-117 form a helical membrane-spanning segment. Residues Glu-118–Leu-547 lie on the Cytoplasmic side of the membrane.

It belongs to the ITPRIP family.

The protein resides in the cell membrane. Functionally, functions as a ligand of CD3E, inhibiting TCR-CD3 complex signaling to regulate T cell activation. Induces stable CD3E-NCK1 binding, thereby preventing the CD3E-ZAP70 interaction and subsequently inhibiting the activation of the downstream ERK-NFkB signaling cascade and calcium influx. This is Inositol 1,4,5-trisphosphate receptor-interacting protein-like 1 (Itpripl1) from Mus musculus (Mouse).